Reading from the N-terminus, the 488-residue chain is Arginine biosynthesis bifunctional protein ArgJ, mitochondrial (488 aa).

Residues T227, K250, T261, E340, N483, and S488 each contribute to the substrate site. Residue T261 is the Nucleophile of the active site.

This sequence belongs to the ArgJ family. In terms of assembly, heterodimer of an alpha and a beta chain. Post-translationally, the alpha and beta chains are autoproteolytically processed from a single precursor protein within the mitochondrion.

It localises to the mitochondrion matrix. The catalysed reaction is N(2)-acetyl-L-ornithine + L-glutamate = N-acetyl-L-glutamate + L-ornithine. The enzyme catalyses L-glutamate + acetyl-CoA = N-acetyl-L-glutamate + CoA + H(+). It participates in amino-acid biosynthesis; L-arginine biosynthesis; L-ornithine and N-acetyl-L-glutamate from L-glutamate and N(2)-acetyl-L-ornithine (cyclic): step 1/1. The protein operates within amino-acid biosynthesis; L-arginine biosynthesis; N(2)-acetyl-L-ornithine from L-glutamate: step 1/4. Catalyzes two activities which are involved in the cyclic version of arginine biosynthesis: the synthesis of acetylglutamate from glutamate and acetyl-CoA, and of ornithine by transacetylation between acetylornithine and glutamate. The polypeptide is Arginine biosynthesis bifunctional protein ArgJ, mitochondrial (Thalassiosira pseudonana (Marine diatom)).